Here is a 354-residue protein sequence, read N- to C-terminus: 2-methylisoborneol synthase (354 aa).

The interval 1-29 (MIELIGHETPVPSQQQHTGGVRGTSACTP) is disordered. Mg(2+) is bound by residues D113, D114, E118, N264, S268, and E272.

This sequence belongs to the terpene synthase family. 2-methylisoborneol synthase subfamily. Requires Mg(2+) as cofactor.

It catalyses the reaction (E)-2-methylgeranyl diphosphate + H2O = 2-methylisoborneol + diphosphate. Functionally, catalyzes the cyclization of 2-methylgeranyl diphosphate (2-MeGPP) to 2-methylisoborneol (2-MIB), which likely involves the intermediacy of 2-methyllinalyl diphosphate. The chain is 2-methylisoborneol synthase from Saccharopolyspora erythraea (strain ATCC 11635 / DSM 40517 / JCM 4748 / NBRC 13426 / NCIMB 8594 / NRRL 2338).